A 126-amino-acid chain; its full sequence is Adenosine 5'-monophosphoramidase HINT1 (126 aa).

Ala-2 carries the post-translational modification N-acetylalanine. An HIT domain is found at 18 to 126 (IFGKIIRKEI…GGRQMNWPPG (109 aa)). Lys-21 and Lys-30 each carry N6-acetyllysine. Position 43–44 (43–44 (DI)) interacts with AMP. A phosphoserine mark is found at Ser-45 and Ser-72. AMP is bound by residues Asn-99, 105 to 107 (GQS), and 112 to 114 (HLH). The Histidine triad motif motif lies at 110-114 (HIHLH). Catalysis depends on His-112, which acts as the Tele-AMP-histidine intermediate.

Belongs to the HINT family. As to quaternary structure, homodimer. Interacts with CDK7. Interacts with RUVBL1 and RUVBL2 and is associated with the LEF1/TCF1-CTNNB1 complex and with a KAT5 histone acetyltransferase complex. Identified in a complex with MITF and CTNNB1. Interacts with CDC34 and RBX1, and is part of a SCF (SKP2-CUL1-F-box protein) E3 ubiquitin-protein ligase complex. Interacts with SUMO1, SUMO2 and RGS17. Interacts with the Ten-1 ICD form of TENM1. Interacts with CALM1; interaction increases in the presence of calcium ions.

The protein resides in the cytoplasm. It is found in the nucleus. The catalysed reaction is adenosine 5'-phosphoramidate + H2O = AMP + NH4(+). Exhibits adenosine 5'-monophosphoramidase activity, hydrolyzing purine nucleotide phosphoramidates with a single phosphate group such as adenosine 5'monophosphoramidate (AMP-NH2) to yield AMP and NH2. Hydrolyzes adenosine 5'monophosphomorpholidate (AMP-morpholidate) and guanosine 5'monophosphomorpholidate (GMP-morpholidate). Hydrolyzes lysyl-AMP (AMP-N-epsilon-(N-alpha-acetyl lysine methyl ester)) generated by lysine tRNA ligase, as well as Met-AMP, His-AMP and Asp-AMP, lysyl-GMP (GMP-N-epsilon-(N-alpha-acetyl lysine methyl ester)) and AMP-N-alanine methyl ester. Can also convert adenosine 5'-O-phosphorothioate and guanosine 5'-O-phosphorothioate to the corresponding nucleoside 5'-O-phosphates with concomitant release of hydrogen sulfide. In addition, functions as a scaffolding protein that modulates transcriptional activation by the LEF1/TCF1-CTNNB1 complex and by the complex formed with MITF and CTNNB1. Modulates p53/TP53 levels and p53/TP53-mediated apoptosis. Modulates proteasomal degradation of target proteins by the SCF (SKP2-CUL1-F-box protein) E3 ubiquitin-protein ligase complex. Also exhibits SUMO-specific isopeptidase activity, deconjugating SUMO1 from RANGAP1 and RGS17. This chain is Adenosine 5'-monophosphoramidase HINT1 (Hint1), found in Rattus norvegicus (Rat).